Here is a 179-residue protein sequence, read N- to C-terminus: Small ribosomal subunit protein uS5 (179 aa).

The S5 DRBM domain occupies Met22 to Val85.

Belongs to the universal ribosomal protein uS5 family. Part of the 30S ribosomal subunit. Contacts proteins S4 and S8.

Its function is as follows. With S4 and S12 plays an important role in translational accuracy. Located at the back of the 30S subunit body where it stabilizes the conformation of the head with respect to the body. In Xylella fastidiosa (strain 9a5c), this protein is Small ribosomal subunit protein uS5.